A 679-amino-acid polypeptide reads, in one-letter code: Glycine--tRNA ligase beta subunit (679 aa).

Belongs to the class-II aminoacyl-tRNA synthetase family. As to quaternary structure, tetramer of two alpha and two beta subunits.

The protein resides in the cytoplasm. It catalyses the reaction tRNA(Gly) + glycine + ATP = glycyl-tRNA(Gly) + AMP + diphosphate. In Streptococcus pyogenes serotype M28 (strain MGAS6180), this protein is Glycine--tRNA ligase beta subunit.